An 87-amino-acid chain; its full sequence is Pro-gurmarin (87 aa).

Residues 1-20 (MAKFAAIVLLILVASATVNA) form the signal peptide. A propeptide spanning residues 21 to 52 (VKEHDELPTTGMSRKILLQPVFKSLIISIAEG) is cleaved from the precursor. Gln-53 is modified (pyrrolidone carboxylic acid). Intrachain disulfides connect Cys-55-Cys-70, Cys-62-Cys-75, and Cys-69-Cys-85.

As to expression, expressed in leaves (at protein level).

In terms of biological role, peptide that strongly, but reversibly, suppresses the sweet taste-response to various sweeteners, including sugars, sweet amino acids and the artificial sweetener saccharin. In rodents, potentially binds to a sweet taste receptor present on apical microvilli of a subset of taste bud cells. Highly effective at blocking the sweet taste-response in rodents such as rats and mice, though mice may possess a mix of gurmarin-sensitive and -insensitive receptors. Has almost no effect on the sweet taste-response in humans. Inhibits Staphylococcus aureus biofilm formation without affecting bacterial viability. May be one of at least 9 different disulfide-rich peptides produced with varying properties. This Gymnema sylvestre (Gurmar) protein is Pro-gurmarin.